We begin with the raw amino-acid sequence, 244 residues long: Krueppel-like factor 9 (244 aa).

Disordered stretches follow at residues 24–51 (VPEHGGAPDAERLRLPEREVTKEHGDPG) and 80–142 (SVCS…SEKR). A compositionally biased stretch (basic and acidic residues) spans 32–51 (DAERLRLPEREVTKEHGDPG). Ser-122 is subject to Phosphoserine. 3 C2H2-type zinc fingers span residues 143 to 167 (HKCPYSGCGKVYGKSSHLKAHYRVH), 173 to 197 (FPCTWPDCLKKFSRSDELTRHYRTH), and 203 to 225 (FRCPLCEKRFMRSDHLTKHARRH).

Belongs to the Sp1 C2H2-type zinc-finger protein family. As to quaternary structure, interacts with ZZEF1.

The protein resides in the nucleus. Transcription factor that binds to GC box promoter elements. Selectively activates mRNA synthesis from genes containing tandem repeats of GC boxes but represses genes with a single GC box. Acts as an epidermal circadian transcription factor regulating keratinocyte proliferation. This chain is Krueppel-like factor 9 (KLF9), found in Sus scrofa (Pig).